A 545-amino-acid chain; its full sequence is Chaperonin GroEL 2 (545 aa).

Residues 29-32 (TLGP), 86-90 (DGTTT), Gly413, 479-481 (NAA), and Asp495 each bind ATP.

Belongs to the chaperonin (HSP60) family. In terms of assembly, forms a cylinder of 14 subunits composed of two heptameric rings stacked back-to-back. Interacts with the co-chaperonin GroES.

The protein localises to the cytoplasm. It carries out the reaction ATP + H2O + a folded polypeptide = ADP + phosphate + an unfolded polypeptide.. Functionally, together with its co-chaperonin GroES, plays an essential role in assisting protein folding. The GroEL-GroES system forms a nano-cage that allows encapsulation of the non-native substrate proteins and provides a physical environment optimized to promote and accelerate protein folding. In Prochlorococcus marinus (strain MIT 9215), this protein is Chaperonin GroEL 2.